The sequence spans 120 residues: Immunogenic miracidial antigen 5D (120 aa).

Positions 41 to 120 (HIDVGDEDYH…PKKYGSGYKH (80 aa)) are disordered. The segment covering 45–66 (GDEDYHDGDDDVDYTDDVDDVD) has biased composition (acidic residues).

The protein belongs to the immunogenic miracidial antigen family.

In Schistosoma japonicum (Blood fluke), this protein is Immunogenic miracidial antigen 5D (5D).